The sequence spans 241 residues: Small ribosomal subunit protein uS2 (241 aa).

Belongs to the universal ribosomal protein uS2 family.

In Hamiltonella defensa subsp. Acyrthosiphon pisum (strain 5AT), this protein is Small ribosomal subunit protein uS2.